The primary structure comprises 296 residues: Cobalamin trafficking protein CblD (296 aa).

The N-terminal 38 residues, Met1–Gly38, are a transit peptide targeting the mitochondrion. Lys203 is subject to N6-acetyllysine.

Heterodimer with MMACHC. Forms a multiprotein complex with MMACHC, MTR and MTRR.

It is found in the cytoplasm. Its subcellular location is the mitochondrion. Its function is as follows. Involved in cobalamin metabolism and trafficking. Plays a role in regulating the biosynthesis and the proportion of two coenzymes, methylcob(III)alamin (MeCbl) and 5'-deoxyadenosylcobalamin (AdoCbl). Promotes oxidation of cob(II)alamin bound to MMACHC. The processing of cobalamin in the cytosol occurs in a multiprotein complex composed of at least MMACHC, MMADHC, MTRR (methionine synthase reductase) and MTR (methionine synthase) which may contribute to shuttle safely and efficiently cobalamin towards MTR in order to produce methionine. The sequence is that of Cobalamin trafficking protein CblD from Mus musculus (Mouse).